The chain runs to 238 residues: Ubiquinone biosynthesis O-methyltransferase (238 aa).

S-adenosyl-L-methionine-binding residues include R38, G57, D78, and L124.

This sequence belongs to the methyltransferase superfamily. UbiG/COQ3 family.

It carries out the reaction a 3-demethylubiquinol + S-adenosyl-L-methionine = a ubiquinol + S-adenosyl-L-homocysteine + H(+). The catalysed reaction is a 3-(all-trans-polyprenyl)benzene-1,2-diol + S-adenosyl-L-methionine = a 2-methoxy-6-(all-trans-polyprenyl)phenol + S-adenosyl-L-homocysteine + H(+). It functions in the pathway cofactor biosynthesis; ubiquinone biosynthesis. In terms of biological role, O-methyltransferase that catalyzes the 2 O-methylation steps in the ubiquinone biosynthetic pathway. The polypeptide is Ubiquinone biosynthesis O-methyltransferase (Marinobacter nauticus (strain ATCC 700491 / DSM 11845 / VT8) (Marinobacter aquaeolei)).